A 138-amino-acid chain; its full sequence is Diuretic hormone 1 (138 aa).

The first 19 residues, M1–A19, serve as a signal peptide directing secretion. The propeptide occupies A20–V78. Position 121 is an isoleucine amide (I121). The propeptide occupies G125–Y138.

This sequence belongs to the sauvagine/corticotropin-releasing factor/urotensin I family.

The protein localises to the secreted. Its function is as follows. Regulation of fluid secretion. This is Diuretic hormone 1 from Manduca sexta (Tobacco hawkmoth).